A 358-amino-acid chain; its full sequence is Aerobic magnesium-protoporphyrin IX monomethyl ester [oxidative] cyclase (358 aa).

It belongs to the AcsF family. Requires Fe cation as cofactor.

The enzyme catalyses Mg-protoporphyrin IX 13-monomethyl ester + 3 NADPH + 3 O2 + 2 H(+) = 3,8-divinyl protochlorophyllide a + 3 NADP(+) + 5 H2O. It functions in the pathway porphyrin-containing compound metabolism; chlorophyll biosynthesis. Its function is as follows. Catalyzes the formation of the isocyclic ring in chlorophyll biosynthesis in aerobic conditions. Mediates the cyclase reaction, which results in the formation of divinylprotochlorophyllide (Pchlide) characteristic of all chlorophylls from magnesium-protoporphyrin IX 13-monomethyl ester (MgPMME). This is Aerobic magnesium-protoporphyrin IX monomethyl ester [oxidative] cyclase from Rubrivivax gelatinosus (Rhodocyclus gelatinosus).